The following is a 147-amino-acid chain: Hemoglobin subunit deltaH (147 aa).

In terms of domain architecture, Globin spans 3–147; the sequence is RLTDSEKAEV…MANALAHKYH (145 aa). 2 residues coordinate heme b: His-64 and His-93.

The protein belongs to the globin family. As to quaternary structure, heterotetramer of two delta chains and two alpha chains. In terms of tissue distribution, red blood cells.

The chain is Hemoglobin subunit deltaH from Heterohyrax brucei (Yellow-spotted hyrax).